The primary structure comprises 241 residues: Pyridoxine 5'-phosphate synthase (241 aa).

Residue Asn10 participates in 3-amino-2-oxopropyl phosphate binding. Position 12-13 (12-13 (DH)) interacts with 1-deoxy-D-xylulose 5-phosphate. Arg21 contacts 3-amino-2-oxopropyl phosphate. His48 (proton acceptor) is an active-site residue. Residues Arg50 and His55 each contribute to the 1-deoxy-D-xylulose 5-phosphate site. Residue Glu75 is the Proton acceptor of the active site. Thr105 is a 1-deoxy-D-xylulose 5-phosphate binding site. His195 serves as the catalytic Proton donor. 3-amino-2-oxopropyl phosphate is bound by residues Gly196 and 217–218 (GH).

Belongs to the PNP synthase family. In terms of assembly, homooctamer; tetramer of dimers.

The protein resides in the cytoplasm. It carries out the reaction 3-amino-2-oxopropyl phosphate + 1-deoxy-D-xylulose 5-phosphate = pyridoxine 5'-phosphate + phosphate + 2 H2O + H(+). It functions in the pathway cofactor biosynthesis; pyridoxine 5'-phosphate biosynthesis; pyridoxine 5'-phosphate from D-erythrose 4-phosphate: step 5/5. Catalyzes the complicated ring closure reaction between the two acyclic compounds 1-deoxy-D-xylulose-5-phosphate (DXP) and 3-amino-2-oxopropyl phosphate (1-amino-acetone-3-phosphate or AAP) to form pyridoxine 5'-phosphate (PNP) and inorganic phosphate. The polypeptide is Pyridoxine 5'-phosphate synthase (Bdellovibrio bacteriovorus (strain ATCC 15356 / DSM 50701 / NCIMB 9529 / HD100)).